The primary structure comprises 280 residues: Probable cell division protein WhiA (280 aa).

The segment at residues 247–279 is a DNA-binding region (H-T-H motif); sequence SLEQIANFFFTKYNIKISRSGIQHFSVNLKKLC.

This sequence belongs to the WhiA family.

Involved in cell division and chromosome segregation. This chain is Probable cell division protein WhiA, found in Mycoplasma genitalium (strain ATCC 33530 / DSM 19775 / NCTC 10195 / G37) (Mycoplasmoides genitalium).